The sequence spans 222 residues: Germin-like protein subfamily 1 member 13 (222 aa).

A signal peptide spans 1-18 (MRVSKSLILITLSALVIS). An intrachain disulfide couples Cys32 to Cys49. The region spanning 63–214 (SGLNQAGSTN…AFQLDVNIVE (152 aa)) is the Cupin type-1 domain. Asn78 is a glycosylation site (N-linked (GlcNAc...) asparagine). Mn(2+) is bound by residues His111, His113, Glu118, and His160.

It belongs to the germin family. As to quaternary structure, oligomer (believed to be a pentamer but probably hexamer).

Its subcellular location is the secreted. The protein localises to the extracellular space. It localises to the apoplast. Functionally, may play a role in plant defense. Probably has no oxalate oxidase activity even if the active site is conserved. This chain is Germin-like protein subfamily 1 member 13 (GLP6), found in Arabidopsis thaliana (Mouse-ear cress).